The sequence spans 397 residues: Mannosylglycerate synthase (397 aa).

GDP-alpha-D-mannose is bound by residues 7–11 (PFKHE), I35, Q66, K76, D100, and 100–101 (DA). Residue D102 participates in a divalent metal cation binding. (R)-glycerate-binding positions include R131 and 136–139 (AMIT). GDP-alpha-D-mannose-binding residues include L163 and D192. H217 is an a divalent metal cation binding site. Residues R218 and Y220 each contribute to the GDP-alpha-D-mannose site.

Belongs to the glycosyltransferase 78 family. As to quaternary structure, homotetramer. Dimer of dimers. Mg(2+) serves as cofactor. It depends on Ca(2+) as a cofactor. The cofactor is Mn(2+). Requires Ni(2+) as cofactor. Co(2+) is required as a cofactor.

It carries out the reaction (R)-glycerate + GDP-alpha-D-mannose = (2R)-2-O-(alpha-D-mannosyl)-glycerate + GDP + H(+). Inhibited by GDP. Involved in the biosynthesis of the stress protectant 2-O-alpha-D-mannosyl glycerate (MG) which is produced in response to growth at supraoptimal temperature and salinity, and protects several enzymes against inactivation by temperature, freeze-drying and osmotic stress. Catalyzes the condensation of alpha-GDP-D-mannose (GDP-Man) with D-glycerate to produce alpha-mannosyl-D-glycerate. It is specific for GDP-Man, but it can also use alpha-GDP-D-glucose (GDP-Glc), beta-GDP-D-fructose, alpha-UDP-D-mannose and alpha-UDP-D-glucose as sugar donors. It is specific for D-glycerate, but it can also use D-lactate and glycolate as sugar acceptors. This reaction occurs with a net retention of anomeric configuration; the newly formed glycosidic linkage has the same alpha configuration as the sugar donor. In Rhodothermus marinus (Rhodothermus obamensis), this protein is Mannosylglycerate synthase (mgs).